The primary structure comprises 157 residues: SsrA-binding protein (157 aa).

The disordered stretch occupies residues 128–157 (LARGKKQHDKRAAEKERDWEREKQRVMRRG). A compositionally biased stretch (basic and acidic residues) spans 137 to 157 (KRAAEKERDWEREKQRVMRRG).

The protein belongs to the SmpB family.

It is found in the cytoplasm. Its function is as follows. Required for rescue of stalled ribosomes mediated by trans-translation. Binds to transfer-messenger RNA (tmRNA), required for stable association of tmRNA with ribosomes. tmRNA and SmpB together mimic tRNA shape, replacing the anticodon stem-loop with SmpB. tmRNA is encoded by the ssrA gene; the 2 termini fold to resemble tRNA(Ala) and it encodes a 'tag peptide', a short internal open reading frame. During trans-translation Ala-aminoacylated tmRNA acts like a tRNA, entering the A-site of stalled ribosomes, displacing the stalled mRNA. The ribosome then switches to translate the ORF on the tmRNA; the nascent peptide is terminated with the 'tag peptide' encoded by the tmRNA and targeted for degradation. The ribosome is freed to recommence translation, which seems to be the essential function of trans-translation. This chain is SsrA-binding protein, found in Methylococcus capsulatus (strain ATCC 33009 / NCIMB 11132 / Bath).